A 135-amino-acid chain; its full sequence is Protein NrdI (135 aa).

Belongs to the NrdI family.

Functionally, probably involved in ribonucleotide reductase function. The sequence is that of Protein NrdI from Pectobacterium carotovorum subsp. carotovorum (strain PC1).